The chain runs to 392 residues: Cytochrome P450 monooxygenase ppzE (392 aa).

A helical membrane pass occupies residues 10–30 (LELVWFVALYPFACWTLFAVL). Asn319 carries N-linked (GlcNAc...) asparagine glycosylation. Residue Cys353 coordinates heme. A glycan (N-linked (GlcNAc...) asparagine) is linked at Asn372.

Belongs to the cytochrome P450 family. The cofactor is heme.

The protein resides in the membrane. The protein operates within secondary metabolite biosynthesis. Functionally, cytochrome P450 monooxygenase; part of the gene cluster that mediates the biosynthesis of pyrrolopyrazines, secondary metabolites showing insecticidal activity. The role of ppzE within the pathway has still to be determined. The single multifunctional NRPS ppzA is sufficient to produce peramine via condensation of 1-pyrroline-5-carboxylate and arginine, N-methylation of the alpha-amino group of arginine and reduction of the thioester and the cyclization to form an iminium ion resulting in release from the peptide synthetase. Deprotonation of this intermediate and oxidation of the pyrroline ring would give rise to peramine. In Epichloe species that produce only peramine, the peramine synthetase gene is not localized in a gene cluster, in contrast to Metarhizium species that contain additional pyrrolopyrazine biosynthesis genes. The 2-oxoglutarate-Fe(II) type oxidoreductase ppzC hydroxylates peramine to yield the newly identified compound 8-hydroxyperamine whereas ppzD converts L-proline into trans-4-hydroxy-L-proline, a precursor of peramine biosynthesis. This Metarhizium rileyi (strain RCEF 4871) (Nomuraea rileyi) protein is Cytochrome P450 monooxygenase ppzE.